Here is a 110-residue protein sequence, read N- to C-terminus: Large ribosomal subunit protein P2 (110 aa).

An O-(pantetheine 4'-phosphoryl)serine; in acyl carrier protein form modification is found at serine 59. Positions 62–110 (LASVPSGGAAPAAAAGGAAAGGAAEEKAEDKPAEKDEESDDDMGFGLFD) are disordered. Low complexity predominate over residues 63–84 (ASVPSGGAAPAAAAGGAAAGGA). The segment covering 85-95 (AEEKAEDKPAE) has biased composition (basic and acidic residues). Position 100 is a phosphoserine; in ribosomal stalk form (serine 100).

It belongs to the eukaryotic ribosomal protein P1/P2 family. In terms of assembly, the phosphorylated form is part of the ribosomal stalk involved in the interaction of the elongation factors with the ribosome during protein synthesis. The phosphopantetheinylated form is part of the 10S triacylglycerol biosynthetic complex involved in de novo fatty acid biosynthesis. Post-translationally, 4'-phosphopantetheine is transferred from CoA to a specific serine by acpS. This modification is essential for activity because fatty acids are bound in thioester linkage to the sulfhydryl of the prosthetic group.

It localises to the cytoplasm. Its function is as follows. Probable bifunctional protein. The phosphorylated protein plays an important role in the elongation step of protein synthesis. The phosphopantetheinylated protein acts as an acyl carrier protein. This Rhodotorula glutinis (Yeast) protein is Large ribosomal subunit protein P2.